A 292-amino-acid polypeptide reads, in one-letter code: Complex I assembly factor TIMMDC1, mitochondrial (292 aa).

A run of 2 helical transmembrane segments spans residues 146 to 168 and 195 to 215; these read WSWRVAAFVTLFNTVNTGLTVYR and GLLSGTIIGVILGFPAGVLIL.

Belongs to the Tim17/Tim22/Tim23 family. As to quaternary structure, associates with the intermediate 315 kDa subcomplex of incompletely assembled complex I.

It is found in the mitochondrion membrane. In terms of biological role, chaperone protein involved in the assembly of the mitochondrial NADH:ubiquinone oxidoreductase complex (complex I). Participates in constructing the membrane arm of complex I. The sequence is that of Complex I assembly factor TIMMDC1, mitochondrial (timmdc1) from Danio rerio (Zebrafish).